Consider the following 578-residue polypeptide: CTP synthase 2 (578 aa).

A Glutamine amidotransferase type-1 domain is found at 300–553 (SIALVGKYTK…MLAASGKLNT (254 aa)). Residues cysteine 399, histidine 526, and glutamate 528 each act as for GATase activity in the active site.

It belongs to the CTP synthase family.

It carries out the reaction UTP + L-glutamine + ATP + H2O = CTP + L-glutamate + ADP + phosphate + 2 H(+). It functions in the pathway pyrimidine metabolism; CTP biosynthesis via de novo pathway; CTP from UDP: step 2/2. In terms of biological role, catalyzes the ATP-dependent amination of UTP to CTP with either L-glutamine or ammonia as the source of nitrogen. Constitutes the rate-limiting enzyme in the synthesis of cytosine nucleotides. The polypeptide is CTP synthase 2 (ctps2) (Xenopus laevis (African clawed frog)).